Consider the following 143-residue polypeptide: 18.1 kDa class I heat shock protein (143 aa).

In terms of domain architecture, sHSP spans 29–143; sequence ENSAFVSTRI…PEVKSIEISS (115 aa).

Belongs to the small heat shock protein (HSP20) family. Forms oligomeric structures.

The protein localises to the cytoplasm. This is 18.1 kDa class I heat shock protein (HSP18.1) from Medicago sativa (Alfalfa).